The sequence spans 237 residues: MDVSVIISSKDPVGQTVKRLGYSFEEIDEDVTEFSYSKGDSIVMICRHESSTRTPAFTIHHPGNPGKSAMGGKPESLAIANARLLTSIFRSMTRIDANIEKIIEATHHGPTEIPKPITFVEIGSDPEMWNNEKLVGKLVEAVLKGIERMEETDCQNTTLIYGGPHYSKLASTVAQSDCISHIISKHYISELSSNVIVQSIERNITRPRTAVLDSIPRSKRETLTSILSSNNISIELR.

This sequence belongs to the DtdA deacylase family. In terms of assembly, monomer. Requires Zn(2+) as cofactor.

It catalyses the reaction a D-aminoacyl-tRNA + H2O = a tRNA + a D-alpha-amino acid + H(+). The enzyme catalyses glycyl-tRNA(Ala) + H2O = tRNA(Ala) + glycine + H(+). Its function is as follows. D-aminoacyl-tRNA deacylase with broad substrate specificity. By recycling D-aminoacyl-tRNA to D-amino acids and free tRNA molecules, this enzyme counteracts the toxicity associated with the formation of D-aminoacyl-tRNA entities in vivo. This chain is D-aminoacyl-tRNA deacylase, found in Metallosphaera sedula (strain ATCC 51363 / DSM 5348 / JCM 9185 / NBRC 15509 / TH2).